Here is a 164-residue protein sequence, read N- to C-terminus: uncharacterized protein (164 aa).

This is an uncharacterized protein from Mycobacterium tuberculosis (strain CDC 1551 / Oshkosh).